The chain runs to 135 residues: Large ribosomal subunit protein uL16c (135 aa).

Belongs to the universal ribosomal protein uL16 family. As to quaternary structure, part of the 50S ribosomal subunit.

The protein resides in the plastid. It localises to the chloroplast. The sequence is that of Large ribosomal subunit protein uL16c from Aethionema cordifolium (Lebanon stonecress).